The following is a 289-amino-acid chain: UPF0276 protein BP2925 (289 aa).

This sequence belongs to the UPF0276 family.

The sequence is that of UPF0276 protein BP2925 from Bordetella pertussis (strain Tohama I / ATCC BAA-589 / NCTC 13251).